A 355-amino-acid polypeptide reads, in one-letter code: UDP-N-acetylglucosamine--N-acetylmuramyl-(pentapeptide) pyrophosphoryl-undecaprenol N-acetylglucosamine transferase (355 aa).

Residues 15-17 (TGG), asparagine 127, arginine 163, serine 191, isoleucine 244, 263-268 (ALTVSE), and glutamine 288 contribute to the UDP-N-acetyl-alpha-D-glucosamine site.

Belongs to the glycosyltransferase 28 family. MurG subfamily.

It localises to the cell inner membrane. It carries out the reaction di-trans,octa-cis-undecaprenyl diphospho-N-acetyl-alpha-D-muramoyl-L-alanyl-D-glutamyl-meso-2,6-diaminopimeloyl-D-alanyl-D-alanine + UDP-N-acetyl-alpha-D-glucosamine = di-trans,octa-cis-undecaprenyl diphospho-[N-acetyl-alpha-D-glucosaminyl-(1-&gt;4)]-N-acetyl-alpha-D-muramoyl-L-alanyl-D-glutamyl-meso-2,6-diaminopimeloyl-D-alanyl-D-alanine + UDP + H(+). The protein operates within cell wall biogenesis; peptidoglycan biosynthesis. Cell wall formation. Catalyzes the transfer of a GlcNAc subunit on undecaprenyl-pyrophosphoryl-MurNAc-pentapeptide (lipid intermediate I) to form undecaprenyl-pyrophosphoryl-MurNAc-(pentapeptide)GlcNAc (lipid intermediate II). This Escherichia coli O9:H4 (strain HS) protein is UDP-N-acetylglucosamine--N-acetylmuramyl-(pentapeptide) pyrophosphoryl-undecaprenol N-acetylglucosamine transferase.